Reading from the N-terminus, the 259-residue chain is Ribonuclease HII (259 aa).

A disordered region spans residues M1–N26. One can recognise an RNase H type-2 domain in the interval A55–E243. A divalent metal cation is bound by residues D61, E62, and D152.

This sequence belongs to the RNase HII family. The cofactor is Mn(2+). Mg(2+) is required as a cofactor.

Its subcellular location is the cytoplasm. The catalysed reaction is Endonucleolytic cleavage to 5'-phosphomonoester.. Functionally, endonuclease that specifically degrades the RNA of RNA-DNA hybrids. This is Ribonuclease HII from Azorhizobium caulinodans (strain ATCC 43989 / DSM 5975 / JCM 20966 / LMG 6465 / NBRC 14845 / NCIMB 13405 / ORS 571).